Here is a 760-residue protein sequence, read N- to C-terminus: Phosphoribosylformylglycinamidine synthase subunit PurL (760 aa).

The segment at methionine 1–glutamine 25 is disordered. The active site involves histidine 69. 2 residues coordinate ATP: tyrosine 72 and lysine 115. Glutamate 117 contributes to the Mg(2+) binding site. Substrate contacts are provided by residues serine 118–histidine 121 and arginine 140. The active-site Proton acceptor is the histidine 119. Aspartate 141 contacts Mg(2+). Glutamine 265 serves as a coordination point for substrate. Aspartate 293 serves as a coordination point for Mg(2+). Residue glutamate 337–glutamine 339 coordinates substrate. ATP contacts are provided by asparagine 519 and glycine 556. Position 557 (asparagine 557) interacts with Mg(2+). Serine 559 contributes to the substrate binding site.

This sequence belongs to the FGAMS family. As to quaternary structure, monomer. Part of the FGAM synthase complex composed of 1 PurL, 1 PurQ and 2 PurS subunits.

Its subcellular location is the cytoplasm. It carries out the reaction N(2)-formyl-N(1)-(5-phospho-beta-D-ribosyl)glycinamide + L-glutamine + ATP + H2O = 2-formamido-N(1)-(5-O-phospho-beta-D-ribosyl)acetamidine + L-glutamate + ADP + phosphate + H(+). The protein operates within purine metabolism; IMP biosynthesis via de novo pathway; 5-amino-1-(5-phospho-D-ribosyl)imidazole from N(2)-formyl-N(1)-(5-phospho-D-ribosyl)glycinamide: step 1/2. In terms of biological role, part of the phosphoribosylformylglycinamidine synthase complex involved in the purines biosynthetic pathway. Catalyzes the ATP-dependent conversion of formylglycinamide ribonucleotide (FGAR) and glutamine to yield formylglycinamidine ribonucleotide (FGAM) and glutamate. The FGAM synthase complex is composed of three subunits. PurQ produces an ammonia molecule by converting glutamine to glutamate. PurL transfers the ammonia molecule to FGAR to form FGAM in an ATP-dependent manner. PurS interacts with PurQ and PurL and is thought to assist in the transfer of the ammonia molecule from PurQ to PurL. The polypeptide is Phosphoribosylformylglycinamidine synthase subunit PurL (Tropheryma whipplei (strain TW08/27) (Whipple's bacillus)).